The primary structure comprises 338 residues: Secretory carrier-associated membrane protein 1 (338 aa).

Residues 1-63 (MSDFDSNPFA…PNVPSTQPAI (63 aa)) are disordered. Residue Ser2 is modified to N-acetylserine. Position 2 is a phosphoserine (Ser2). Over 2–155 (SDFDSNPFAD…QKTVKIMYYL (154 aa)) the chain is Cytoplasmic. The residue at position 45 (Thr45) is a Phosphothreonine. A helical membrane pass occupies residues 156 to 176 (WMFHAVTLFLNIFGCLAWFCV). Over 177-181 (DPSRG) the chain is Lumenal. Residues 182–202 (VDFGLSILWFLLFTPCSFVCW) traverse the membrane as a helical segment. The Cytoplasmic segment spans residues 203–217 (YRPLYGAFRSDSSFR). Residues 218–238 (FFVFFFVYICQFAVHVLQAAG) form a helical membrane-spanning segment. The Lumenal segment spans residues 239-261 (FHNWGNCGWISSLTGLNQSIPVG). A helical membrane pass occupies residues 262–282 (IMMIIIAALFTASAVISLVMF). Over 283 to 338 (KKVHGLYRTTGASFEKAQQEFATGVMSNKTVQTAAANAASTAATSAAQNAFKGNQI) the chain is Cytoplasmic.

It belongs to the SCAMP family. Interacts with SYNRG, ITSN1 and SLC9A7.

The protein localises to the golgi apparatus. It localises to the trans-Golgi network membrane. The protein resides in the recycling endosome membrane. In terms of biological role, functions in post-Golgi recycling pathways. Acts as a recycling carrier to the cell surface. The protein is Secretory carrier-associated membrane protein 1 (SCAMP1) of Sus scrofa (Pig).